We begin with the raw amino-acid sequence, 284 residues long: MLIIESVLLLRQHIRRLRQEGKRIALVPTMGNLHDGHMKLVDEAKASADVVVVSIFVNPMQFDRVDDLARYPRTLQDDCEKLNKRHVDFVFAPTPAEVYPQGTEGQTYVDVPGLSTMLEGASRPGHFRGVSTIVSKLFNLVQPDVACFGEKDFQQLALIRKMVADMGYDIEIIGVPIVRAKDGLALSSRNGYLTADQRKIAPGLYKVLSAVAEKLAAGDRQLDEIIAIAEQELNEKGFRADDIQIRDADTLLELTDASQRAVILMAAWLGQARLIDNRIVTLAQ.

An ATP-binding site is contributed by 30 to 37 (MGNLHDGH). The active-site Proton donor is His37. Gln61 contacts (R)-pantoate. Gln61 provides a ligand contact to beta-alanine. 149–152 (GEKD) is an ATP binding site. Gln155 provides a ligand contact to (R)-pantoate. Residues Val178 and 186 to 189 (LSSR) contribute to the ATP site.

Belongs to the pantothenate synthetase family. As to quaternary structure, homodimer.

The protein resides in the cytoplasm. The enzyme catalyses (R)-pantoate + beta-alanine + ATP = (R)-pantothenate + AMP + diphosphate + H(+). It functions in the pathway cofactor biosynthesis; (R)-pantothenate biosynthesis; (R)-pantothenate from (R)-pantoate and beta-alanine: step 1/1. Functionally, catalyzes the condensation of pantoate with beta-alanine in an ATP-dependent reaction via a pantoyl-adenylate intermediate. In Klebsiella pneumoniae subsp. pneumoniae (strain ATCC 700721 / MGH 78578), this protein is Pantothenate synthetase.